Here is a 283-residue protein sequence, read N- to C-terminus: Serine/threonine-protein phosphatase Pgam5, mitochondrial (283 aa).

The helical transmembrane segment at 7–23 (MYGLPSAAVAVGTALLN) threads the bilayer.

The protein belongs to the phosphoglycerate mutase family. BPG-dependent PGAM subfamily. As to quaternary structure, interacts with skn-1.

The protein resides in the mitochondrion outer membrane. It catalyses the reaction O-phospho-L-seryl-[protein] + H2O = L-seryl-[protein] + phosphate. The catalysed reaction is O-phospho-L-threonyl-[protein] + H2O = L-threonyl-[protein] + phosphate. Functionally, displays phosphatase activity for serine/threonine residues. Has apparently no phosphoglycerate mutase activity. In Caenorhabditis briggsae, this protein is Serine/threonine-protein phosphatase Pgam5, mitochondrial (pgam-5).